Consider the following 511-residue polypeptide: 2,3-bisphosphoglycerate-independent phosphoglycerate mutase (511 aa).

Aspartate 12 lines the Mn(2+) pocket. Tyrosine 36 is subject to Phosphotyrosine. Serine 62 contacts Mn(2+). Residue serine 62 is the Phosphoserine intermediate of the active site. Substrate-binding positions include histidine 123, 153–154 (RD), arginine 185, arginine 191, 261–264 (RPDR), and lysine 336. Mn(2+) is bound by residues aspartate 403, histidine 407, aspartate 444, histidine 445, and histidine 462.

Belongs to the BPG-independent phosphoglycerate mutase family. Monomer. Mn(2+) serves as cofactor.

The enzyme catalyses (2R)-2-phosphoglycerate = (2R)-3-phosphoglycerate. Its pathway is carbohydrate degradation; glycolysis; pyruvate from D-glyceraldehyde 3-phosphate: step 3/5. In terms of biological role, essential for rapid growth and for sporulation. Catalyzes the interconversion of 2-phosphoglycerate and 3-phosphoglycerate. The chain is 2,3-bisphosphoglycerate-independent phosphoglycerate mutase from Bacillus licheniformis (strain ATCC 14580 / DSM 13 / JCM 2505 / CCUG 7422 / NBRC 12200 / NCIMB 9375 / NCTC 10341 / NRRL NRS-1264 / Gibson 46).